The chain runs to 314 residues: Phosphoribosylaminoimidazole-succinocarboxamide synthase (314 aa).

The protein belongs to the SAICAR synthetase family.

The catalysed reaction is 5-amino-1-(5-phospho-D-ribosyl)imidazole-4-carboxylate + L-aspartate + ATP = (2S)-2-[5-amino-1-(5-phospho-beta-D-ribosyl)imidazole-4-carboxamido]succinate + ADP + phosphate + 2 H(+). The protein operates within purine metabolism; IMP biosynthesis via de novo pathway; 5-amino-1-(5-phospho-D-ribosyl)imidazole-4-carboxamide from 5-amino-1-(5-phospho-D-ribosyl)imidazole-4-carboxylate: step 1/2. This Bacteroides fragilis (strain ATCC 25285 / DSM 2151 / CCUG 4856 / JCM 11019 / LMG 10263 / NCTC 9343 / Onslow / VPI 2553 / EN-2) protein is Phosphoribosylaminoimidazole-succinocarboxamide synthase.